The sequence spans 590 residues: Aspartate--tRNA(Asp/Asn) ligase (590 aa).

Residue glutamate 178 participates in L-aspartate binding. An aspartate region spans residues 202–205; the sequence is QIYK. L-aspartate is bound at residue arginine 224. ATP contacts are provided by residues 224–226 and glutamine 233; that span reads RDE. Histidine 453 lines the L-aspartate pocket. Residue glutamate 487 participates in ATP binding. An L-aspartate-binding site is contributed by arginine 494. 539–542 lines the ATP pocket; the sequence is GLDR.

This sequence belongs to the class-II aminoacyl-tRNA synthetase family. Type 1 subfamily. In terms of assembly, homodimer.

Its subcellular location is the cytoplasm. It carries out the reaction tRNA(Asx) + L-aspartate + ATP = L-aspartyl-tRNA(Asx) + AMP + diphosphate. Functionally, aspartyl-tRNA synthetase with relaxed tRNA specificity since it is able to aspartylate not only its cognate tRNA(Asp) but also tRNA(Asn). Reaction proceeds in two steps: L-aspartate is first activated by ATP to form Asp-AMP and then transferred to the acceptor end of tRNA(Asp/Asn). The chain is Aspartate--tRNA(Asp/Asn) ligase from Treponema denticola (strain ATCC 35405 / DSM 14222 / CIP 103919 / JCM 8153 / KCTC 15104).